A 600-amino-acid chain; its full sequence is Alanine--tRNA ligase (600 aa).

4 residues coordinate Zn(2+): His463, His467, Cys565, and His569.

This sequence belongs to the class-II aminoacyl-tRNA synthetase family. Requires Zn(2+) as cofactor.

The protein resides in the cytoplasm. It carries out the reaction tRNA(Ala) + L-alanine + ATP = L-alanyl-tRNA(Ala) + AMP + diphosphate. Functionally, catalyzes the attachment of alanine to tRNA(Ala) in a two-step reaction: alanine is first activated by ATP to form Ala-AMP and then transferred to the acceptor end of tRNA(Ala). Also edits incorrectly charged Ser-tRNA(Ala) and Gly-tRNA(Ala) via its editing domain. This chain is Alanine--tRNA ligase (alaS), found in Treponema denticola (strain ATCC 35405 / DSM 14222 / CIP 103919 / JCM 8153 / KCTC 15104).